We begin with the raw amino-acid sequence, 128 residues long: Nanos homolog 1 (128 aa).

The interval 7–23 is essential for its translational repressor activity; it reads FNSWSDYLGLSSLISRG. Residues 23 to 58 form a disordered region; sequence GLQPREGGESPRPRWKASSPTPAEPLPSKAAEAHGH. Residues 60 to 114 form a Nanos-type zinc finger; it reads GCGFCRSNREAQSLYSSHRLRAPDGRVLCPVLRGYTCPLCGANGDWAHTMRYCPL. Positions 61, 64, 77, 88, 96, 99, 107, and 112 each coordinate Zn(2+). 2 short sequence motifs (C2HC) span residues 61 to 88 and 96 to 112; these read CGFC…RVLC and CPLC…MRYC.

Belongs to the nanos family. As to quaternary structure, interacts with ccnb1.

It is found in the cytoplasm. The protein localises to the perinuclear region. Acts as a translational repressor. Can mediate repression affecting different steps in the translation process: cap-driven, IRES-driven, polyadenylated RNAs or nonpolyadenylated RNAs. Essential for the development of primordial germ cells (PGCs) by ensuring their proper migration and survival. This chain is Nanos homolog 1 (nanos1), found in Xenopus tropicalis (Western clawed frog).